The following is a 474-amino-acid chain: Coiled-coil domain-containing protein 149 (474 aa).

Coiled coils occupy residues 1 to 199 (MANQ…RKNS) and 259 to 286 (IQHQ…LEVS). Disordered stretches follow at residues 301–388 (SDPT…EEEV) and 405–474 (AELE…TVKT). The segment covering 323 to 337 (TENKADPKDGEAQKQ) has biased composition (basic and acidic residues). Residues 343–353 (CAAAEALTAPE) show a composition bias toward low complexity. Positions 385–414 (EEEVNSLGREIIKLTKEQAAAELEEVRRES) form a coiled coil.

Belongs to the CCDC149 family.

The sequence is that of Coiled-coil domain-containing protein 149 (CCDC149) from Homo sapiens (Human).